Consider the following 398-residue polypeptide: MSEGNAAGEPSAPGGPRPLLSGARGLIGRRPAPPLTPGRLPSIRSRDLTLGGVKKKTFTPNIISRKIKEEPKEEVTVKKEKRERDRDRQRDSHGRGRGRPEVIQSHSIFEQGPAEMMKKKGNWDKTVDMSDVGPSHIINIKKEKRETDEETKQILRMLEKDDFIDDPGLRNDIRNMPVQLPLAHSGWLFKEENEETDVKPRLAGPKEEDMEVDMPAVKVKEEPRDEDEEAKMKAPLRAARKIPGLPKDVSVAELLRELSLTQEEELLFLQLPDSLPGQPPTQDIKPIKTEVQSEDGQMVVIKQEKDREARLAENTCTLADLTEGQVGKLLIRKSGKVQLLLGKVTLDVTMGTTCSFLQELVSVGLGDSRTGDMTVLGHIKHKLVCSPNFESLLDHRHR.

Residues 1-105 (MSEGNAAGEP…GRGRPEVIQS (105 aa)) form a disordered region. Serine 2 is subject to N-acetylserine. Serine 42 carries the post-translational modification Phosphoserine. A compositionally biased stretch (basic and acidic residues) spans 66-100 (KIKEEPKEEVTVKKEKRERDRDRQRDSHGRGRGRP). Glycyl lysine isopeptide (Lys-Gly) (interchain with G-Cter in SUMO2) cross-links involve residues lysine 68 and lysine 78. Residues arginine 95, arginine 97, and arginine 99 each carry the omega-N-methylarginine modification. Glycyl lysine isopeptide (Lys-Gly) (interchain with G-Cter in SUMO2) cross-links involve residues lysine 141, lysine 152, lysine 160, lysine 190, lysine 199, lysine 206, lysine 220, lysine 285, and lysine 302.

The protein belongs to the eukaryotic RPC4/POLR3D RNA polymerase subunit family. In terms of assembly, component of the RNA polymerase III complex consisting of 17 subunits: a ten-subunit horseshoe-shaped catalytic core composed of POLR3A/RPC1, POLR3B/RPC2, POLR1C/RPAC1, POLR1D/RPAC2, POLR3K/RPC10, POLR2E/RPABC1, POLR2F/RPABC2, POLR2H/RPABC3, POLR2K/RPABC4 and POLR2L/RPABC5; a mobile stalk composed of two subunits POLR3H/RPC8 and CRCP/RPC9, protruding from the core and functioning primarily in transcription initiation; and additional subunits homologous to general transcription factors of the RNA polymerase II machinery, POLR3C/RPC3-POLR3F/RPC6-POLR3G/RPC7 heterotrimer required for transcription initiation and POLR3D/RPC4-POLR3E/RPC5 heterodimer involved in both transcription initiation and termination. Post-translationally, sumoylation on Lys-141 can serve as a signal to mark misfolded Pol III for proteasomal degradation.

Its subcellular location is the nucleus. DNA-dependent RNA polymerase catalyzes the transcription of DNA into RNA using the four ribonucleoside triphosphates as substrates. Specific peripheric component of RNA polymerase III (Pol III) which synthesizes small non-coding RNAs including 5S rRNA, snRNAs, tRNAs and miRNAs from at least 500 distinct genomic loci. Enables recruitment of Pol III at transcription initiation site and drives transcription initiation from both type 2 and type 3 DNA promoters. Required for efficient transcription termination and reinitiation. Pol III plays a key role in sensing and limiting infection by intracellular bacteria and DNA viruses. Acts as nuclear and cytosolic DNA sensor involved in innate immune response. Can sense non-self dsDNA that serves as template for transcription into dsRNA. The non-self RNA polymerase III transcripts, such as Epstein-Barr virus-encoded RNAs (EBERs) induce type I interferon and NF-kappa-B through the RIG-I pathway. The chain is DNA-directed RNA polymerase III subunit RPC4 (POLR3D) from Bos taurus (Bovine).